The following is a 526-amino-acid chain: Probable metalloreductase AIM14 (526 aa).

Transmembrane regions (helical) follow at residues 17–37, 60–80, 96–113, 138–158, 172–192, 199–219, and 221–241; these read IPYGYYVLIVSFFYLVFLGVL, LYLVNPVVHLPILLVAVLLPF, RLGRLSYALLPLNLLLNL, CIIIIAVVHGILFLINWALGE, LAGVLLFAPLISMIFFSIGPM, AFYVIHNLTGISFIFVVAFHA, and PSVTIPYLLINIAILLWQGFA. In terms of domain architecture, Ferric oxidoreductase spans 97-214; that stretch reads LGRLSYALLP…NLTGISFIFV (118 aa). In terms of domain architecture, FAD-binding FR-type spans 238–370; the sequence is QGFAKFYYAK…GGSGISFGLP (133 aa).

It belongs to the ferric reductase (FRE) family. AIM14 subfamily.

The protein resides in the membrane. Probable cell surface metalloreductase. May be involved in iron or copper homeostasis. The sequence is that of Probable metalloreductase AIM14 (AIM14) from Zygosaccharomyces rouxii (strain ATCC 2623 / CBS 732 / NBRC 1130 / NCYC 568 / NRRL Y-229).